Reading from the N-terminus, the 300-residue chain is Hydroxyquinol 1,2-dioxygenase (300 aa).

Residues Tyr-167, Tyr-200, His-224, and His-226 each coordinate Fe cation.

Belongs to the intradiol ring-cleavage dioxygenase family. Fe(3+) is required as a cofactor.

It catalyses the reaction benzene-1,2,4-triol + O2 = maleylacetate + 2 H(+). The protein operates within aromatic compound metabolism. It participates in xenobiotic degradation. In terms of biological role, involved in the degradation of para-nitrophenol (4-NP). Catalyzes the conversion of hydroxyquinol to malelylacetate. This is Hydroxyquinol 1,2-dioxygenase (npcC) from Rhodococcus opacus (Nocardia opaca).